The primary structure comprises 253 residues: Phosphate import ATP-binding protein PstB 1 (253 aa).

In terms of domain architecture, ABC transporter spans leucine 7–isoleucine 248. Glycine 39–serine 46 contributes to the ATP binding site.

The protein belongs to the ABC transporter superfamily. Phosphate importer (TC 3.A.1.7) family. The complex is composed of two ATP-binding proteins (PstB), two transmembrane proteins (PstC and PstA) and a solute-binding protein (PstS).

Its subcellular location is the cell membrane. The catalysed reaction is phosphate(out) + ATP + H2O = ADP + 2 phosphate(in) + H(+). In terms of biological role, part of the ABC transporter complex PstSACB involved in phosphate import. Responsible for energy coupling to the transport system. The chain is Phosphate import ATP-binding protein PstB 1 from Lactococcus lactis subsp. lactis (strain IL1403) (Streptococcus lactis).